Reading from the N-terminus, the 271-residue chain is Ribosomal RNA small subunit methyltransferase A (271 aa).

Positions 11, 13, 38, 58, 86, and 101 each coordinate S-adenosyl-L-methionine.

It belongs to the class I-like SAM-binding methyltransferase superfamily. rRNA adenine N(6)-methyltransferase family. RsmA subfamily.

Its subcellular location is the cytoplasm. The enzyme catalyses adenosine(1518)/adenosine(1519) in 16S rRNA + 4 S-adenosyl-L-methionine = N(6)-dimethyladenosine(1518)/N(6)-dimethyladenosine(1519) in 16S rRNA + 4 S-adenosyl-L-homocysteine + 4 H(+). Specifically dimethylates two adjacent adenosines (A1518 and A1519) in the loop of a conserved hairpin near the 3'-end of 16S rRNA in the 30S particle. May play a critical role in biogenesis of 30S subunits. This Helicobacter pylori (strain ATCC 700392 / 26695) (Campylobacter pylori) protein is Ribosomal RNA small subunit methyltransferase A.